The chain runs to 375 residues: Methylthioribose-1-phosphate isomerase (375 aa).

The active-site Proton donor is the D259.

It belongs to the eIF-2B alpha/beta/delta subunits family. MtnA subfamily.

The protein localises to the cytoplasm. The protein resides in the nucleus. It catalyses the reaction 5-(methylsulfanyl)-alpha-D-ribose 1-phosphate = 5-(methylsulfanyl)-D-ribulose 1-phosphate. It participates in amino-acid biosynthesis; L-methionine biosynthesis via salvage pathway; L-methionine from S-methyl-5-thio-alpha-D-ribose 1-phosphate: step 1/6. Functionally, catalyzes the interconversion of methylthioribose-1-phosphate (MTR-1-P) into methylthioribulose-1-phosphate (MTRu-1-P). This chain is Methylthioribose-1-phosphate isomerase, found in Populus trichocarpa (Western balsam poplar).